A 377-amino-acid polypeptide reads, in one-letter code: Probable trehalose-phosphate phosphatase G (377 aa).

The disordered stretch occupies residues 1-20 (MDLNINKTTPVLSDPTTPVS).

Belongs to the trehalose phosphatase family. It depends on a divalent metal cation as a cofactor.

The enzyme catalyses alpha,alpha-trehalose 6-phosphate + H2O = alpha,alpha-trehalose + phosphate. Its pathway is glycan biosynthesis; trehalose biosynthesis. Its function is as follows. Removes the phosphate from trehalose 6-phosphate to produce free trehalose. Trehalose accumulation in plant may improve abiotic stress tolerance. This is Probable trehalose-phosphate phosphatase G (TPPG) from Arabidopsis thaliana (Mouse-ear cress).